The chain runs to 445 residues: mRNA cleavage and polyadenylation factor CLP1 (445 aa).

ATP contacts are provided by residues E33 and 131-136 (SSGKTS).

The protein belongs to the Clp1 family. Clp1 subfamily. As to quaternary structure, component of a pre-mRNA cleavage factor complex. Interacts directly with PCF11.

The protein resides in the nucleus. Required for endonucleolytic cleavage during polyadenylation-dependent pre-mRNA 3'-end formation. This chain is mRNA cleavage and polyadenylation factor CLP1, found in Eremothecium gossypii (strain ATCC 10895 / CBS 109.51 / FGSC 9923 / NRRL Y-1056) (Yeast).